Consider the following 874-residue polypeptide: MTSERYNAREAEPRWQRQWDEKAIFATKNDDPRPKYYVLEMFPYPSGRIHIGHVRNYTLGDVLARFMRAKGFNVLHPMGWDAFGLPAENAAIERKVAPKAWTYDNIAAMKKQLRSIGLSLDWAREFATCDPSYYKHQQKMFLDFMQAGLVEREQRKVNWDPVDMTVLANEQVIDGRGWRSGAVVEQREMNQWVFKITKYSQELLDALDGLDRWPDKVRLMQRNWIGRSEGLLIRFALDPQTTPAGETELKIFTTRPDTLFGAKFMAISADHPLAQAAAAKNPELAAFIAEIKRIGTAQEAIDTAEKQGFDTGIRAVHPFDPSWTLPVYVANFVLMEYGTGAIFGCPAHDQRDLDFVNKYGLGNTPVVCPEGQDPASFVITDTAFDGDGRLINSRFLDGMTIAQAKDEVAKRLEAEQRGGAAVGERQVNFRLRDWGISRQRYWGCPIPVIHCPTCDVVPVPAKDLPVVLPDDVTFDKPGNALDHHPTWKHVTCPKCGGKATRETDTMDTFVDSSWYFARFTDPWNETAPTTPDVANRMMPVDQYIGGVEHAILHLLYSRFFTRAMKATGHVAMDEPFAGMFTQGMVVHETYQKADGTYVNPAEVKIEVGGNGRRAVLTATGEDITIGPIEKMSKSKKNTVDPDDIIESYGADVARWFMLSDSPPDRDVIWSDERVQGAARFVQRLWRLVNESVAAGQEAPSSRPATFGPDALALRKAAHGALDKVTGGIERLHFNVCLAHIREFANALAEVLARPAKPAPDLAWAIREAAQILVQLFSPMMPHLAEECWQVLGQGGLISEASWPQIERDLLVEDSVTLVVQVNGKKRGEVTVASNAQNPEIESAVLALDAVKLALDGKPVRKVIIVPKRIVNVVG.

Positions 43–53 match the 'HIGH' region motif; that stretch reads PYPSGRIHIGH. Residues 630–634 carry the 'KMSKS' region motif; sequence KMSKS. ATP is bound at residue K633.

Belongs to the class-I aminoacyl-tRNA synthetase family.

It localises to the cytoplasm. The catalysed reaction is tRNA(Leu) + L-leucine + ATP = L-leucyl-tRNA(Leu) + AMP + diphosphate. This chain is Leucine--tRNA ligase, found in Bradyrhizobium sp. (strain BTAi1 / ATCC BAA-1182).